A 273-amino-acid chain; its full sequence is Thymidylate synthase (273 aa).

Arg-31 is a dUMP binding site. His-61 contributes to the (6R)-5,10-methylene-5,6,7,8-tetrahydrofolate binding site. 136 to 137 (RR) provides a ligand contact to dUMP. Cys-156 (nucleophile) is an active-site residue. Residues 176–179 (RSAD), Asn-187, and 217–219 (HIY) each bind dUMP. (6R)-5,10-methylene-5,6,7,8-tetrahydrofolate is bound at residue Asp-179. Ala-272 serves as a coordination point for (6R)-5,10-methylene-5,6,7,8-tetrahydrofolate.

It belongs to the thymidylate synthase family. Bacterial-type ThyA subfamily. In terms of assembly, homodimer.

Its subcellular location is the cytoplasm. It carries out the reaction dUMP + (6R)-5,10-methylene-5,6,7,8-tetrahydrofolate = 7,8-dihydrofolate + dTMP. Its pathway is pyrimidine metabolism; dTTP biosynthesis. Catalyzes the reductive methylation of 2'-deoxyuridine-5'-monophosphate (dUMP) to 2'-deoxythymidine-5'-monophosphate (dTMP) while utilizing 5,10-methylenetetrahydrofolate (mTHF) as the methyl donor and reductant in the reaction, yielding dihydrofolate (DHF) as a by-product. This enzymatic reaction provides an intracellular de novo source of dTMP, an essential precursor for DNA biosynthesis. In Corynebacterium jeikeium (strain K411), this protein is Thymidylate synthase.